The following is a 455-amino-acid chain: Bifunctional protein GlmU (455 aa).

Residues 1–226 (MIAVAILAAG…YQEILGINDR (226 aa)) form a pyrophosphorylase region. UDP-N-acetyl-alpha-D-glucosamine is bound by residues 7 to 10 (LAAG), K21, Q73, and 78 to 79 (GT). D103 is a Mg(2+) binding site. Residues G140, E155, N170, and N224 each coordinate UDP-N-acetyl-alpha-D-glucosamine. N224 lines the Mg(2+) pocket. Residues 227-247 (KQLATAYKILQDRIKDDWLVA) are linker. The tract at residues 248–455 (GVTIMDPDSI…RPISSKQTEK (208 aa)) is N-acetyltransferase. 2 residues coordinate UDP-N-acetyl-alpha-D-glucosamine: R329 and K347. The Proton acceptor role is filled by H359. Residues Y362 and N373 each coordinate UDP-N-acetyl-alpha-D-glucosamine. Acetyl-CoA-binding positions include A376, 382–383 (NY), A419, and R436.

The protein in the N-terminal section; belongs to the N-acetylglucosamine-1-phosphate uridyltransferase family. It in the C-terminal section; belongs to the transferase hexapeptide repeat family. In terms of assembly, homotrimer. The cofactor is Mg(2+).

The protein resides in the cytoplasm. The catalysed reaction is alpha-D-glucosamine 1-phosphate + acetyl-CoA = N-acetyl-alpha-D-glucosamine 1-phosphate + CoA + H(+). It catalyses the reaction N-acetyl-alpha-D-glucosamine 1-phosphate + UTP + H(+) = UDP-N-acetyl-alpha-D-glucosamine + diphosphate. It participates in nucleotide-sugar biosynthesis; UDP-N-acetyl-alpha-D-glucosamine biosynthesis; N-acetyl-alpha-D-glucosamine 1-phosphate from alpha-D-glucosamine 6-phosphate (route II): step 2/2. Its pathway is nucleotide-sugar biosynthesis; UDP-N-acetyl-alpha-D-glucosamine biosynthesis; UDP-N-acetyl-alpha-D-glucosamine from N-acetyl-alpha-D-glucosamine 1-phosphate: step 1/1. It functions in the pathway bacterial outer membrane biogenesis; LPS lipid A biosynthesis. In terms of biological role, catalyzes the last two sequential reactions in the de novo biosynthetic pathway for UDP-N-acetylglucosamine (UDP-GlcNAc). The C-terminal domain catalyzes the transfer of acetyl group from acetyl coenzyme A to glucosamine-1-phosphate (GlcN-1-P) to produce N-acetylglucosamine-1-phosphate (GlcNAc-1-P), which is converted into UDP-GlcNAc by the transfer of uridine 5-monophosphate (from uridine 5-triphosphate), a reaction catalyzed by the N-terminal domain. The chain is Bifunctional protein GlmU from Acaryochloris marina (strain MBIC 11017).